The chain runs to 210 residues: MVQSCSAYGCKNRYDKDKPVSFHKFPLTRPSLCKQWEAAVKRKNFKPTKYSSICSEHFTPDCFKRECNNKLLKENAVPTIFLYIEPHEKKEDLESQEQLPSPSPPASQVDAAIGLLMPPLQTPDNLSVFCDHNYTVEDTMHQRKRILQLEQQVEKLRKKLKTAQQRCRRQERQLEKLKEVVHFQREKDDASERGYVILPNDYFEIVEVPA.

A THAP-type zinc finger spans residues 5–57 (CSAYGCKNRYDKDKPVSFHKFPLTRPSLCKQWEAAVKRKNFKPTKYSSICSEH). An HCFC1-binding motif (HBM) motif is present at residues 131-134 (DHNY). A coiled-coil region spans residues 137-187 (EDTMHQRKRILQLEQQVEKLRKKLKTAQQRCRRQERQLEKLKEVVHFQREK).

The protein belongs to the THAP1 family. As to quaternary structure, interacts with PAWR. Component of a THAP1/THAP3-HCFC1-OGT complex that contains, either THAP1 or THAP3, HCFC1 and OGT. Interacts with OGT. Interacts (via the HBM) with HCFC1 (via the Kelch-repeat domain); the interaction recruits HCFC1 to the RRM1 promoter. Highest levels in heart, liver and kidney. Lower levels in brain and lung.

The protein resides in the nucleus. It localises to the nucleoplasm. It is found in the PML body. In terms of biological role, DNA-binding transcription regulator that regulates endothelial cell proliferation and G1/S cell-cycle progression. Specifically binds the 5'-[AT]NTNN[GT]GGCA[AGT]-3' core DNA sequence and acts by modulating expression of pRB-E2F cell-cycle target genes, including RRM1. Component of a THAP1/THAP3-HCFC1-OGT complex that is required for the regulation of the transcriptional activity of RRM1. May also have pro-apoptotic activity by potentiating both serum-withdrawal and TNF-induced apoptosis. The chain is THAP domain-containing protein 1 (Thap1) from Mus musculus (Mouse).